Reading from the N-terminus, the 1173-residue chain is MTGQCCEELQRAPKPRMALRTKKGLKGSIEDVLGDLLGDDTTPPEKPAEPASHAKDTASSPQWQASKAKFLPKDSVEGLAGADAEASSVSDADPQVFLQNMKDLDSMDDDLFGRMKSHQPSGKGAAKGPGKEGPSNHKPAGTLTANEKGYTMPTKKPPPSSSKTGLQYKKFSFEDFEDPLAGLLSDEEEETATKLPAVERKPAPKSPGAAAGQGPSVPLTPGDTPIRKKELLFDEGDDIMTTLGFEDSPKAERKKTGDQEGPLPARSKLDELLGRGTAAKLLTRPGTGERREFQLDKKYQKMGGEESVPARDKEDSWDDETLTFGAYKPTVASSEGRQSRRQSVSRFLGEGGPDPKGESLGFKQSSPPASSPIHPRKGGADWLGLKDNDLDLLSPSPVQKAQQEDSPMTPSLLPPTNQPSAPEPQSAPTGLPSAAKPPAKGARPSLKASQASSPKASEEKEDDWLSHVISQKKSQNLAREERAGPPKDLASLGSLGQTPSGSLPVAQVLEQAPAGEASKPTTQGMAAVRPGVTGSSMSWSQATTVLPVDDPKKGAASASGDFSSREPAVYIPHSQEPTGLSVPIQTLLPESMMQSLLPGSGYQKQLLAAQGQLQSSTAQLQVELLQSQTKLSELEAQVRKLELERAQHRMLLESLQQRHQADLELIEDAHRSRIKVLETSYQQREEQLRREKEVLSAQHASYCREAEQARAELVAQHQRQMAMAEQERDQEVARLRELQQASILEMRKDHEHQLQRLKMLKDQEIDAVTSATSHTRSLNGIIEQMEKFSSSLNTLSSRVEASHLTTSQQRELGIRQQDEQLRALQERLGRQQRDMEEERNRLQEVIGKMEVRLSEQSRLLEQERWRVAAEKTKAESAQRTLEEQRKIMVQQIAMEREELERAKSALLEEQKSVMNKCGEERRRLAAEWAEYFTQQKLSKERAEREAERAMHADSQREGTIISLTKEQAELTVRACELRAKEEKLLAEREALERERQELRLEKDRLHKASLRLQARAQEVEHMSKVASKKYEEGEQALQEAQQMQNEQQGRLQVVQRQQEWLRQQEQRVHQEHLSLAQQRLQLDRVRQEVPASLPGLPPRVQGPAASSRDAVQAPASSSPQCSQPAAAQVPTHLLAKLLLLKHTAEEDHDFLENEQFFLETLKKAPYNMAYHSA.

The tract at residues 17–168 (MALRTKKGLK…PSSSKTGLQY (152 aa)) is disordered. A compositionally biased stretch (basic and acidic residues) spans 46-56 (KPAEPASHAKD). The span at 80 to 93 (AGADAEASSVSDAD) shows a compositional bias: low complexity. Ser-172 is modified (phosphoserine). Disordered regions lie at residues 180-225 (LAGL…GDTP) and 241-566 (TTLG…SSRE). Residues 206 to 216 (SPGAAAGQGPS) show a composition bias toward low complexity. 2 stretches are compositionally biased toward basic and acidic residues: residues 247–258 (DSPKAERKKTGD) and 287–299 (TGER…DKKY). Polar residues-rich tracts occupy residues 331 to 345 (VASS…QSVS), 396 to 411 (SPVQ…MTPS), 468 to 477 (VISQKKSQNL), and 533 to 544 (TGSSMSWSQATT). 3 coiled-coil regions span residues 617 to 742 (TAQL…QQAS), 808 to 917 (QQRE…MNKC), and 975 to 1057 (CELR…VQRQ). Residue Lys-1002 forms a Glycyl lysine isopeptide (Lys-Gly) (interchain with G-Cter in SUMO2) linkage. The tract at residues 1091–1124 (ASLPGLPPRVQGPAASSRDAVQAPASSSPQCSQP) is disordered. Over residues 1110-1124 (AVQAPASSSPQCSQP) the composition is skewed to low complexity.

As to quaternary structure, interacts with PARD3. May interact with FAS cytoplasmic domain. Interacts with TRAPPC14. Broadly expressed.

It localises to the cytoplasm. Its subcellular location is the cytoskeleton. The protein localises to the microtubule organizing center. The protein resides in the centrosome. It is found in the centriole. It localises to the spindle pole. Its subcellular location is the cell junction. Keratin-binding protein required for epithelial cell polarization. Involved in apical junction complex (AJC) assembly via its interaction with PARD3. Required for ciliogenesis. This chain is Fas-binding factor 1 (Fbf1), found in Mus musculus (Mouse).